Reading from the N-terminus, the 790-residue chain is Probable copper-transporting ATPase SynA (790 aa).

Residues 1–105 (MPAAIVHSAD…IPPLQQQRLQ (105 aa)) are Cytoplasmic-facing. In terms of domain architecture, HMA spans 14–81 (TSILVEVEGM…EITGLGFRAQ (68 aa)). The Cu cation site is built by Cys25 and Cys28. Residues 106 to 125 (LAIAAFLLIVSSWGHLGHWL) traverse the membrane as a helical segment. Residues 126 to 134 (DHPLPGTDQ) lie on the Extracellular side of the membrane. Residues 135 to 154 (LWFHALLAIWALLGPGRSIL) form a helical membrane-spanning segment. Residues 155 to 166 (QAGWQGLRCGAP) are Cytoplasmic-facing. A helical membrane pass occupies residues 167 to 189 (NMNSLVLLGTGSAYLASLVALLW). Over 190 to 193 (PQLG) the chain is Extracellular. Residues 194–211 (WVCFLDEPVMLLGFILLG) form a helical membrane-spanning segment. At 212-357 (RTLEEQARFR…RKAPVQRFAD (146 aa)) the chain is on the cytoplasmic side. A helical membrane pass occupies residues 358–380 (AIAGRFVYGVCAIAALTFGFWAT). Residues 381–416 (LGSRWWPQVLQQPLPGLLIHAPHHGMEMAHPHSHSP) are Extracellular-facing. The helical transmembrane segment at 417–439 (LLLALTLAISVLVVACPCALGLA) threads the bilayer. Residues 440–726 (TPTAILVATG…QMGLRTIRQN (287 aa)) lie on the Cytoplasmic side of the membrane. Asp476 acts as the 4-aspartylphosphate intermediate in catalysis. The Mg(2+) site is built by Asp669 and Asp673. The chain crosses the membrane as a helical span at residues 727–749 (LTWALGYNVVMLPLAAGAFLPAY). Topologically, residues 750–753 (GLAL) are extracellular. The chain crosses the membrane as a helical span at residues 754–776 (TPAIAGACMAVSSLAVVSNSLLL). Residues 777–790 (RYWFRRSLNHSVSV) lie on the Cytoplasmic side of the membrane.

The protein belongs to the cation transport ATPase (P-type) (TC 3.A.3) family. Type IB subfamily.

The protein localises to the cell membrane. It catalyses the reaction Cu(2+)(in) + ATP + H2O = Cu(2+)(out) + ADP + phosphate + H(+). In terms of biological role, involved in copper transport. This Synechococcus sp. (strain ATCC 27144 / PCC 6301 / SAUG 1402/1) (Anacystis nidulans) protein is Probable copper-transporting ATPase SynA (synA).